We begin with the raw amino-acid sequence, 748 residues long: Pleckstrin homology domain-containing family M member 3 (748 aa).

Disordered regions lie at residues 88 to 107 (HAKE…PLLS) and 129 to 187 (NDSL…RNKN). Composition is skewed to basic and acidic residues over residues 129 to 140 (NDSLDHLEDAPK) and 148 to 159 (SRSDVSHIDWKN). A compositionally biased stretch (polar residues) spans 167 to 180 (QRSSSQGMHCTSPF). 2 PH domains span residues 200 to 297 (NILK…EAIC) and 348 to 443 (NIIK…SAAN). Residues 656–709 (SHVYSCSLCSQKGFICEICNNGEILYPFEENSTSRCENCGAVFHSDCKVRTVPC) form a Phorbol-ester/DAG-type zinc finger.

The protein resides in the cytoplasm. It is found in the golgi apparatus. The protein localises to the cell membrane. Functionally, may play a role during muscle differentiation. This is Pleckstrin homology domain-containing family M member 3 (plekhm3) from Xenopus laevis (African clawed frog).